The following is a 163-amino-acid chain: uncharacterized protein (163 aa).

As to expression, expressed in keratinocytes.

This is an uncharacterized protein from Homo sapiens (Human).